Here is a 241-residue protein sequence, read N- to C-terminus: Viral CASP8 and FADD-like apoptosis regulator (241 aa).

2 consecutive DED domains span residues 8-78 (PSLP…SRFG) and 95-175 (RYRK…QLVE). Residues 212 to 241 (CMPVQESSDSPELLRTPVQESSSDSPEQTT) are disordered. Residues 229–241 (VQESSSDSPEQTT) show a composition bias toward polar residues.

As to quaternary structure, associates with the death-inducing signaling complex (DISC) formed by TNFRSF6/FAS, FADD and CASP8. Interacts with FADD. Interacts with host TRAF2. Interacts with host NEMO/IKBKG (via N-terminus). Interacts with host SH3BP4; this interaction plays an important in the suppression of host autophagy.

The protein resides in the host cytoplasm. It localises to the host nucleus. Its function is as follows. Inhibits TNFRSF1A, TNFRSF6/FAS and TNFRSF12 induced apoptosis. Directs the degradation of host NFKBIB but not NFKBIA. Also suppresses host NF-kappa-B activation by interacting with and preventing ubiquitination of host NEMO/IKBKG, the NF-kappa-B essential modulator subunit of the IKK complex. Interferes with host CASP8/caspase-8 recruitment and activation at the death-inducing signaling complex (DISC). May lead to higher virus production and contribute to virus persistence and oncogenicity. Also participates in the inhibition of host autophagy by interacting with host SH3BP4. In Homo sapiens (Human), this protein is Viral CASP8 and FADD-like apoptosis regulator.